Consider the following 360-residue polypeptide: MTTQRLKIPRSTRHQHSGRDCDGMDIEFVRRLNERIIIWRTLRAESRLVVMLALIALDSSLCTYVTPNKQPRKAKWVEIFMYLTRPKNLYLSRKEFHILFLANGTRAYSVTATLRIHPILHEGSSADVIFFSNVSSTEAYAIIPDVTSEFLPTTPCIELDIDVFVERTQPPDDPHNCIPISIGVWWSFSKRRFYYLRMEESLLAICPAGWQQRSLSATLAKFINHESGCRECREHCDLHIDAYNVLWECGSFGHTCLCRGPCMWIKARQRDLLVEGDKSLGCVLFMDMVNSVRLITNPSTETRITERLEDVIVAGVGYSNIPVNSCGWHLVCLPEIWSAIMIQGCIRLTRLCNDRQPNVV.

This sequence belongs to the herpesviridae cytoplasmic envelopment protein 2 family. As to quaternary structure, interacts with cytoplasmic envelopment protein 3 and with the capsid.

The protein resides in the virion tegument. It is found in the host cytoplasm. It localises to the host nucleus. Functionally, plays a critical role in cytoplasmic virus egress. Participates in the final step of tegumentation and envelope acquisition within the host cytoplasm by directly interacting with the capsid. Upon virion binding to target cell, a signaling cascade is triggered to disrupt the interaction with the capsid, thereby preparing capsid uncoating. This is Cytoplasmic envelopment protein 2 (MDV028) from Gallus gallus (Chicken).